The following is a 388-amino-acid chain: GTPase Obg (388 aa).

Positions 1–159 (MKFVDEATIR…RSLRLELMLL (159 aa)) constitute an Obg domain. Residues 160–333 (ADVGLLGMPN…LALKLLDFID (174 aa)) enclose the OBG-type G domain. Residues 166–173 (GMPNAGKS), 191–195 (FTTLV), 213–216 (DIPG), 283–286 (NKAD), and 314–316 (SAY) contribute to the GTP site. S173 and T193 together coordinate Mg(2+). The interval 356 to 377 (QNANESVNEDYDDDLDDDDYDD) is disordered. Over residues 362–377 (VNEDYDDDLDDDDYDD) the composition is skewed to acidic residues.

It belongs to the TRAFAC class OBG-HflX-like GTPase superfamily. OBG GTPase family. Monomer. Requires Mg(2+) as cofactor.

It is found in the cytoplasm. Functionally, an essential GTPase which binds GTP, GDP and possibly (p)ppGpp with moderate affinity, with high nucleotide exchange rates and a fairly low GTP hydrolysis rate. Plays a role in control of the cell cycle, stress response, ribosome biogenesis and in those bacteria that undergo differentiation, in morphogenesis control. The protein is GTPase Obg of Shewanella piezotolerans (strain WP3 / JCM 13877).